A 422-amino-acid polypeptide reads, in one-letter code: Cytokine receptor-like factor 1 (422 aa).

Residues 1–37 form the signal peptide; sequence MPAGRRGPAAQSARRPPPLLPLLLLLCVLGAPRAGSG. The Ig-like C2-type domain maps to 38–131; the sequence is AHTAVISPQD…SILAGSCLYV (94 aa). N-linked (GlcNAc...) asparagine glycans are attached at residues Asn-92, Asn-104, and Asn-140. Fibronectin type-III domains are found at residues 137–232 and 237–341; these read KPVN…ILDV and PPPD…TPRS. Cys-143 and Cys-153 are oxidised to a cystine. Asn-168 carries N-linked (GlcNAc...) asparagine glycosylation. Cys-184 and Cys-195 are disulfide-bonded. The residue at position 219 (Ser-219) is a Phosphoserine. N-linked (GlcNAc...) asparagine glycosylation is present at Asn-292. A WSXWS motif motif is present at residues 327-331; it reads WSEWS. Residues 332 to 363 form a disordered region; that stretch reads HPTAASTPRSERPGPGGGACEPRGGEPSSGPV. N-linked (GlcNAc...) asparagine glycosylation is present at Asn-382. The disordered stretch occupies residues 399–422; sequence HKTRNQDEGILPSGRRGTARGPAR.

Belongs to the type I cytokine receptor family. Type 3 subfamily. In terms of assembly, forms covalent di- and tetramers. Forms a heteromeric complex with cardiotrophin-like cytokine CLCF1/CLC; the CRLF1-CLCF1 complex is a ligand for the ciliary neurotrophic factor receptor/CNTFR. The CRLF1-CLCF1 heterodimer binds SORL1 (via N-terminal ectodomain); within this complex, the interaction is mediated predominantly by the CRLF1 moiety. The tripartite signaling complex formed by CRLF1, CLCF1 and CNTFR also binds SORL1. As to expression, highest levels of expression observed in spleen, thymus, lymph node, appendix, bone marrow, stomach, placenta, heart, thyroid and ovary. Strongly expressed also in fetal lung.

The protein resides in the secreted. Functionally, in complex with CLCF1, forms a heterodimeric neurotropic cytokine that plays a crucial role during neuronal development. May also play a regulatory role in the immune system. This Homo sapiens (Human) protein is Cytokine receptor-like factor 1 (CRLF1).